Consider the following 896-residue polypeptide: Valine--tRNA ligase (896 aa).

The short motif at 48-58 (PNVTGSLHMGH) is the 'HIGH' region element. The short motif at 543 to 547 (KMSKS) is the 'KMSKS' region element. ATP is bound at residue K546. Residues 830–896 (VIDLDAERTR…ARLGAALERL (67 aa)) are a coiled coil.

It belongs to the class-I aminoacyl-tRNA synthetase family. ValS type 1 subfamily. In terms of assembly, monomer.

The protein resides in the cytoplasm. The catalysed reaction is tRNA(Val) + L-valine + ATP = L-valyl-tRNA(Val) + AMP + diphosphate. Its function is as follows. Catalyzes the attachment of valine to tRNA(Val). As ValRS can inadvertently accommodate and process structurally similar amino acids such as threonine, to avoid such errors, it has a 'posttransfer' editing activity that hydrolyzes mischarged Thr-tRNA(Val) in a tRNA-dependent manner. The sequence is that of Valine--tRNA ligase from Granulibacter bethesdensis (strain ATCC BAA-1260 / CGDNIH1).